Consider the following 107-residue polypeptide: UPF0145 protein BT_3410 (107 aa).

It belongs to the UPF0145 family.

In Bacteroides thetaiotaomicron (strain ATCC 29148 / DSM 2079 / JCM 5827 / CCUG 10774 / NCTC 10582 / VPI-5482 / E50), this protein is UPF0145 protein BT_3410.